The chain runs to 152 residues: Ribosome maturation factor RimP (152 aa).

The protein belongs to the RimP family.

Its subcellular location is the cytoplasm. Functionally, required for maturation of 30S ribosomal subunits. The sequence is that of Ribosome maturation factor RimP from Burkholderia multivorans (strain ATCC 17616 / 249).